The sequence spans 442 residues: tRNA-2-methylthio-N(6)-dimethylallyladenosine synthase (442 aa).

Residues 2-120 (KKVFIRTFGC…LPKMIVDKET (119 aa)) enclose the MTTase N-terminal domain. The [4Fe-4S] cluster site is built by Cys11, Cys49, Cys83, Cys157, Cys161, and Cys164. The Radical SAM core domain maps to 143–375 (RVEGGAAFVS…NEVIEAETAR (233 aa)). The TRAM domain maps to 378 to 441 (QTMIGTVQRC…TFSLRGKIVE (64 aa)).

Belongs to the methylthiotransferase family. MiaB subfamily. Monomer. The cofactor is [4Fe-4S] cluster.

It is found in the cytoplasm. It catalyses the reaction N(6)-dimethylallyladenosine(37) in tRNA + (sulfur carrier)-SH + AH2 + 2 S-adenosyl-L-methionine = 2-methylsulfanyl-N(6)-dimethylallyladenosine(37) in tRNA + (sulfur carrier)-H + 5'-deoxyadenosine + L-methionine + A + S-adenosyl-L-homocysteine + 2 H(+). Functionally, catalyzes the methylthiolation of N6-(dimethylallyl)adenosine (i(6)A), leading to the formation of 2-methylthio-N6-(dimethylallyl)adenosine (ms(2)i(6)A) at position 37 in tRNAs that read codons beginning with uridine. The chain is tRNA-2-methylthio-N(6)-dimethylallyladenosine synthase from Neisseria meningitidis serogroup A / serotype 4A (strain DSM 15465 / Z2491).